The following is a 442-amino-acid chain: Probable diguanylate cyclase DgcI (442 aa).

The signal sequence occupies residues 1–23 (MSRINKFVLTVSLLIFIMISAVA). Cys24 is lipidated: N-palmitoyl cysteine. Cys24 carries S-diacylglycerol cysteine lipidation. Residues 231 to 251 (LIIFFAALVAVISGASCLYLV) traverse the membrane as a helical segment. Residues 319-442 (KGGYLCLFDV…KNGRAQISWQ (124 aa)) form the GGDEF domain. Residue Asp327 coordinates Mg(2+). Substrate is bound by residues Asn335, His340, and Asp344. Asp371 is a binding site for Mg(2+).

In terms of assembly, homodimer. Requires Mg(2+) as cofactor.

It is found in the cell membrane. The enzyme catalyses 2 GTP = 3',3'-c-di-GMP + 2 diphosphate. The protein operates within purine metabolism; 3',5'-cyclic di-GMP biosynthesis. Its function is as follows. Catalyzes the synthesis of cyclic-di-GMP (c-di-GMP) via the condensation of 2 GTP molecules. The sequence is that of Probable diguanylate cyclase DgcI from Escherichia coli (strain K12).